Reading from the N-terminus, the 36-residue chain is Photosystem II reaction center protein M (36 aa).

A helical membrane pass occupies residues 5–25 (ILAFIATALFILVPTAFLLII).

This sequence belongs to the PsbM family. PSII is composed of 1 copy each of membrane proteins PsbA, PsbB, PsbC, PsbD, PsbE, PsbF, PsbH, PsbI, PsbJ, PsbK, PsbL, PsbM, PsbT, PsbX, PsbY, PsbZ, Psb30/Ycf12, at least 3 peripheral proteins of the oxygen-evolving complex and a large number of cofactors. It forms dimeric complexes.

Its subcellular location is the plastid. It is found in the chloroplast thylakoid membrane. Its function is as follows. One of the components of the core complex of photosystem II (PSII). PSII is a light-driven water:plastoquinone oxidoreductase that uses light energy to abstract electrons from H(2)O, generating O(2) and a proton gradient subsequently used for ATP formation. It consists of a core antenna complex that captures photons, and an electron transfer chain that converts photonic excitation into a charge separation. This subunit is found at the monomer-monomer interface. The sequence is that of Photosystem II reaction center protein M from Panax ginseng (Korean ginseng).